The following is a 180-amino-acid chain: Alkyl hydroperoxide reductase AhpD (180 aa).

Residue C131 is the Proton donor of the active site. C131 and C134 are disulfide-bonded. C134 serves as the catalytic Cysteine sulfenic acid (-SOH) intermediate.

This sequence belongs to the AhpD family.

The enzyme catalyses N(6)-[(R)-dihydrolipoyl]-L-lysyl-[lipoyl-carrier protein] + a hydroperoxide = N(6)-[(R)-lipoyl]-L-lysyl-[lipoyl-carrier protein] + an alcohol + H2O. In terms of biological role, antioxidant protein with alkyl hydroperoxidase activity. Required for the reduction of the AhpC active site cysteine residues and for the regeneration of the AhpC enzyme activity. This is Alkyl hydroperoxide reductase AhpD from Hyphomonas neptunium (strain ATCC 15444).